Consider the following 432-residue polypeptide: Adenosylhomocysteinase (432 aa).

Thr-56, Asp-131, and Glu-156 together coordinate substrate. Residue 157–159 participates in NAD(+) binding; the sequence is TTT. Substrate-binding residues include Lys-186 and Asp-190. NAD(+) contacts are provided by residues Asn-191, 222-227, Glu-243, 299-301, and Asn-346; these read GDVGKG and IGH.

Belongs to the adenosylhomocysteinase family. NAD(+) serves as cofactor.

It carries out the reaction S-adenosyl-L-homocysteine + H2O = L-homocysteine + adenosine. The protein operates within amino-acid biosynthesis; L-homocysteine biosynthesis; L-homocysteine from S-adenosyl-L-homocysteine: step 1/1. In terms of biological role, adenosylhomocysteine is a competitive inhibitor of S-adenosyl-L-methionine-dependent methyl transferase reactions; therefore adenosylhomocysteinase may play a key role in the control of methylations via regulation of the intracellular concentration of adenosylhomocysteine. In Anopheles gambiae (African malaria mosquito), this protein is Adenosylhomocysteinase (Ahcy13).